The following is a 567-amino-acid chain: Interleukin-1 receptor-like 1 (567 aa).

The N-terminal stretch at 1–26 (MIDRQRMGLWALAILTLPMYLTVTEG) is a signal peptide. 2 consecutive Ig-like C2-type domains span residues 27–109 (SKSS…LNVT) and 120–203 (PDYL…VTAT). Over 27–332 (SKSSWGLENE…LRRKQPIDHR (306 aa)) the chain is Extracellular. Cysteine 42 and cysteine 93 are disulfide-bonded. N-linked (GlcNAc...) asparagine glycans are attached at residues asparagine 60, asparagine 101, asparagine 107, asparagine 146, asparagine 176, and asparagine 194. 2 disulfide bridges follow: cysteine 117–cysteine 157 and cysteine 139–cysteine 187. Residues 204-216 (RSFTVEEKGFSMF) are flexible linker. An Ig-like C2-type 3 domain is found at 217 to 324 (PVITNPPYNH…GMIRHTIRLR (108 aa)). Residues asparagine 225, asparagine 259, and asparagine 278 are each glycosylated (N-linked (GlcNAc...) asparagine). Disulfide bonds link cysteine 240–cysteine 308 and cysteine 243–cysteine 287. Residue lysine 326 forms a Glycyl lysine isopeptide (Lys-Gly) (interchain with G-Cter in ubiquitin) linkage. Residues 333 to 355 (SIYYIVAGCSLLLMFINVLVIVL) traverse the membrane as a helical segment. Topologically, residues 356 to 567 (KVFWIEVALF…GKACLDLKHF (212 aa)) are cytoplasmic. Positions 380 to 540 (KLYDAYIIYP…KFWKHVRYQM (161 aa)) constitute a TIR domain. A Phosphoserine; by GSK3-beta modification is found at serine 442. Glutamate 466 is a catalytic residue.

Belongs to the interleukin-1 receptor family. In terms of assembly, interacts with MYD88, IRAK1, IRAK4, and TRAF6. Bound to its ligand IL33, interacts with IL1RAP to form the minimal interleukin-33 signaling complex with a 1:1:1 stoichiometry. Interacts with KIT (bound to KITLG/SCF). A mast cell-specific KITLG/SCF-induced interleukin-33 signaling complex contains IL1RL1, IL1RAP, KIT and MYD88. Interacts with TMED1. Phosphorylated by GSK3B at Ser-442; leading to proteasomal degradation. In terms of processing, ubiquitinated at Lys-326 in a FBXL19-mediated manner; leading to proteasomal degradation. Ubiquitination by TRAF6 via 'Lys-27'-linked polyubiquitination and deubiquitination by USP38 serves as a critical regulatory mechanism for fine-tuning IL1RL1-mediated inflammatory response. As to expression, predominantly expressed in hematopoietic tissues, and in macrophage, erythroid, epithelial and fibroblast cell lines. Isoform A is expressed in brain astrocytes and microglia. Isoform B is expressed in brain endothelial cells.

The protein resides in the cell membrane. It localises to the secreted. It catalyses the reaction NAD(+) + H2O = ADP-D-ribose + nicotinamide + H(+). Its function is as follows. Receptor for interleukin-33 (IL-33) which plays crucial roles in innate and adaptive immunity, contributing to tissue homeostasis and responses to environmental stresses together with coreceptor IL1RAP. Its stimulation recruits MYD88, IRAK1, IRAK4, and TRAF6, followed by phosphorylation of MAPK3/ERK1 and/or MAPK1/ERK2, MAPK14, and MAPK8. Possibly involved in helper T-cell function. Upon tissue injury, induces UCP2-dependent mitochondrial rewiring that attenuates the generation of reactive oxygen species and preserves the integrity of Krebs cycle required for persistent production of itaconate and subsequent GATA3-dependent differentiation of inflammation-resolving alternatively activated macrophages. Inhibits IL-33 signaling. This chain is Interleukin-1 receptor-like 1 (Il1rl1), found in Mus musculus (Mouse).